We begin with the raw amino-acid sequence, 602 residues long: MRNPEAPRLVGVYRRVVPVGARRVIAEHVDSGFRQQVKEGIAAAAAKRDQINRVRVARSHRKLLARHDRRVVSVGKAPRIAHVVPRATPLDARRANLDDVTEALRHAGIDYFCVRSASETSTAVAVREDDREHVITALRQACRVRPGYVIPVGKGEPLDEAALPAFGTGPWKRVSGSPVFRCTWYRTDETGRMVFGLRYGCDIEFWHQEGGELVSPRRNPVAEAVPVEEEATEADESLFTDLAPLPEDRIPRAGEDLDAGDGAAGGPRPGLVRTRPAFAAGSVGRRTFPIDVVYTWVDGSDPAWIRSRAEFSDRPYHEEAANAARYLSRDELRYSLRSLNLYAPWVRNIYLVTADQTPDWLNTDHPRLKVVSHKEIFSEPTSLPTFNSHAIESQLHHIDGLSEHFLYFNDDVMLGRETLPQHFFLPNGLGQYYLSPALIPFGEPNSEDPPVAAAGKNNRRLIAERFGGSTIFRKMKHVPHALHRGVLEAIETDFADEHRRTAASRFRSAGDISVTSSLHHYYAFHTGRSFPGDQLVYRYLDVGKPGAERVLGRLLAEREAHVFCLNDTTSTESELAHQQALMTRFLDEYFPFPSPYERGADD.

A disordered region spans residues 251–271; the sequence is PRAGEDLDAGDGAAGGPRPGL.

Belongs to the stealth family.

In Streptomyces coelicolor (strain ATCC BAA-471 / A3(2) / M145), this protein is Exopolysaccharide phosphotransferase SCO2594.